A 306-amino-acid polypeptide reads, in one-letter code: Recombination-associated protein RdgC (306 aa).

This sequence belongs to the RdgC family.

Its subcellular location is the cytoplasm. It is found in the nucleoid. Functionally, may be involved in recombination. The polypeptide is Recombination-associated protein RdgC (Pseudomonas putida (strain GB-1)).